Reading from the N-terminus, the 372-residue chain is Testis-specific serine/threonine-protein kinase 5 (372 aa).

Residues 27–302 (LLSSKKIGSG…LQQVAAHCWM (276 aa)) form the Protein kinase domain. ATP contacts are provided by residues 33–41 (IGSGAFSKV) and Lys72. Asp173 acts as the Proton acceptor in catalysis. The interval 314 to 372 (GAPREQDHSWSTVAPDNTEPDRDTRHARSKGSSSSSGRTSPRRPSLAQLCNTWKPAPEQ) is disordered. Low complexity predominate over residues 343 to 358 (KGSSSSSGRTSPRRPS).

Belongs to the protein kinase superfamily. CAMK Ser/Thr protein kinase family. It depends on Mg(2+) as a cofactor. Autophosphorylated.

It catalyses the reaction L-seryl-[protein] + ATP = O-phospho-L-seryl-[protein] + ADP + H(+). The enzyme catalyses L-threonyl-[protein] + ATP = O-phospho-L-threonyl-[protein] + ADP + H(+). Its activity is regulated as follows. Activated by phosphorylation on Thr-207, potentially by autophosphorylation. In terms of biological role, may be involved in a signaling pathway during male germ cell development or mature sperm function. This chain is Testis-specific serine/threonine-protein kinase 5, found in Mus musculus (Mouse).